Reading from the N-terminus, the 555-residue chain is Urocanate hydratase (555 aa).

NAD(+)-binding positions include 51–52 (GG), Q129, 175–177 (GMG), E195, 262–266 (QTSAH), 272–273 (YL), and Y321. The active site involves C409. Residue G491 participates in NAD(+) binding.

This sequence belongs to the urocanase family. The cofactor is NAD(+).

The protein localises to the cytoplasm. The enzyme catalyses 4-imidazolone-5-propanoate = trans-urocanate + H2O. It participates in amino-acid degradation; L-histidine degradation into L-glutamate; N-formimidoyl-L-glutamate from L-histidine: step 2/3. In terms of biological role, catalyzes the conversion of urocanate to 4-imidazolone-5-propionate. In Xanthomonas campestris pv. campestris (strain ATCC 33913 / DSM 3586 / NCPPB 528 / LMG 568 / P 25), this protein is Urocanate hydratase.